A 164-amino-acid chain; its full sequence is V-type proton ATPase 16 kDa proteolipid subunit (164 aa).

The Lumenal segment spans residues Met-1 to Thr-9. A helical transmembrane segment spans residues Ala-10–Gly-32. Residues Thr-33–Ser-54 are Cytoplasmic-facing. A helical membrane pass occupies residues Ile-55–Ile-75. Residues Ser-76–His-94 lie on the Lumenal side of the membrane. Residues Leu-95 to Gly-116 form a helical membrane-spanning segment. The Cytoplasmic portion of the chain corresponds to Asp-117–Lys-128. A helical membrane pass occupies residues Leu-129–Leu-154. The Lumenal portion of the chain corresponds to Ser-155–Asp-164.

Belongs to the V-ATPase proteolipid subunit family. V-ATPase is a heteromultimeric enzyme composed of a peripheral catalytic V1 complex (main components: subunits A, B, C, D, E, and F) attached to an integral membrane V0 proton pore complex (main component: the proteolipid protein; which is present as a hexamer that forms the proton-conducting pore).

The protein localises to the vacuole membrane. Proton-conducting pore forming subunit of the membrane integral V0 complex of vacuolar ATPase. V-ATPase is responsible for acidifying a variety of intracellular compartments in eukaryotic cells. The polypeptide is V-type proton ATPase 16 kDa proteolipid subunit (Vigna radiata var. radiata (Mung bean)).